Reading from the N-terminus, the 275-residue chain is MSAEVKVTGQNQEQFLLLAKSAKGAALATLIHQVLEAPGVYVFGELLDMPNVRELAESDFASTFRLLTVFAYGTYADYLAEARNLPPLTEAQKNKLRHLSVVTLAAKVKCIPYAVLLEALALRNVRQLEDLVIEAVYADVLRGSLDQRNQRLEVDYSIGRDIQRQDLSAIARTLQEWCVGCEVVLSGIEEQVSRANQHKEQQLGLKQQIESEVANLKKTIKVTTAAAAAATSQDPEQHLTELREPAPGTNQRQPSKKASKGKGLRGSAKIWSKSN.

Serine 2 carries the N-acetylserine modification. Residues 2-159 (SAEVKVTGQN…QRLEVDYSIG (158 aa)) form the PCI domain. A coiled-coil region spans residues 185–233 (LSGIEEQVSRANQHKEQQLGLKQQIESEVANLKKTIKVTTAAAAAATSQ). Residues 227–275 (AAAATSQDPEQHLTELREPAPGTNQRQPSKKASKGKGLRGSAKIWSKSN) form a disordered region. Positions 235-244 (PEQHLTELRE) are enriched in basic and acidic residues. Basic residues predominate over residues 254–263 (PSKKASKGKG).

This sequence belongs to the CSN7/EIF3M family. CSN7 subfamily. In terms of assembly, component of the CSN complex, composed of COPS1/GPS1, COPS2, COPS3, COPS4, COPS5, COPS6, COPS7 (COPS7A or COPS7B), COPS8 and COPS9. In the complex, it probably interacts directly with COPS1, COPS2, COPS4, COPS5, COPS6 and COPS8. Interacts with PMF1. Interacts with the translation initiation factor EIF3S6. Interacts with CK2 and PKD. Interacts directly with ID3. In terms of processing, phosphorylated by CK2 and PKD kinases.

The protein resides in the cytoplasm. It localises to the nucleus. Functionally, component of the COP9 signalosome complex (CSN), a complex involved in various cellular and developmental processes. The CSN complex is an essential regulator of the ubiquitin (Ubl) conjugation pathway by mediating the deneddylation of the cullin subunits of SCF-type E3 ligase complexes, leading to decrease the Ubl ligase activity of SCF-type complexes such as SCF, CSA or DDB2. The complex is also involved in phosphorylation of p53/TP53, JUN, I-kappa-B-alpha/NFKBIA, ITPK1 and IRF8/ICSBP, possibly via its association with CK2 and PKD kinases. CSN-dependent phosphorylation of TP53 and JUN promotes and protects degradation by the Ubl system, respectively. This chain is COP9 signalosome complex subunit 7a (COPS7A), found in Pongo abelii (Sumatran orangutan).